Reading from the N-terminus, the 432-residue chain is MSNVVIVGTQWGDEGKGKIVDLLTEQADMVVRFQGGHNAGHTLVVDGKKYILHLIPSGIIRPGKQCAIGNGVVLDPAALLAEMAKLAEVGVAISPENLKIADRTNLILPYHNALDQAREKKKGEEKKIGTTGRGIGPCYEDKSARRGIRLVDLYNPALFEEKLRENLDLVNFLLKNYYHEEGFQLADIRDDYLRMGDQLAPYCEDLAPWLEQAQAEGKNILFEGAQGALLDVDFGTYPFVTSSTTNASGACSGSGVAPGKLDYVLGIVKAYTTRVGSGPFPTELECADGQYLAKKGHEFGATTGRPRRCGWFDAVVVRHSARVSGLNGICITKLDVMDGMSEVRLCTGYRIDGKETAYVPADTAKLDRVEPIYETMPGWRESTVGCKNWQDLPAAAQAYLNRLVQVVGVPISILSTGPDRSETLIVQNPFHA.

GTP is bound by residues 12 to 18 (GDEGKGK) and 40 to 42 (GHT). Catalysis depends on Asp13, which acts as the Proton acceptor. Asp13 and Gly40 together coordinate Mg(2+). IMP contacts are provided by residues 13-16 (DEGK), 38-41 (NAGH), Thr131, Arg145, Gln226, Thr241, and Arg305. Residue His41 is the Proton donor of the active site. A substrate-binding site is contributed by 301 to 307 (ATTGRPR). Residues Arg307, 333-335 (KLD), and 415-417 (STG) each bind GTP.

This sequence belongs to the adenylosuccinate synthetase family. As to quaternary structure, homodimer. The cofactor is Mg(2+).

It is found in the cytoplasm. It catalyses the reaction IMP + L-aspartate + GTP = N(6)-(1,2-dicarboxyethyl)-AMP + GDP + phosphate + 2 H(+). It functions in the pathway purine metabolism; AMP biosynthesis via de novo pathway; AMP from IMP: step 1/2. In terms of biological role, plays an important role in the de novo pathway of purine nucleotide biosynthesis. Catalyzes the first committed step in the biosynthesis of AMP from IMP. The polypeptide is Adenylosuccinate synthetase (Magnetococcus marinus (strain ATCC BAA-1437 / JCM 17883 / MC-1)).